A 1391-amino-acid polypeptide reads, in one-letter code: DNA-directed RNA polymerase subunit beta' (1391 aa).

Residues cysteine 72, cysteine 74, cysteine 87, and cysteine 90 each contribute to the Zn(2+) site. Aspartate 462, aspartate 464, and aspartate 466 together coordinate Mg(2+). Zn(2+)-binding residues include cysteine 816, cysteine 890, cysteine 897, and cysteine 900.

Belongs to the RNA polymerase beta' chain family. The RNAP catalytic core consists of 2 alpha, 1 beta, 1 beta' and 1 omega subunit. When a sigma factor is associated with the core the holoenzyme is formed, which can initiate transcription. Mg(2+) serves as cofactor. It depends on Zn(2+) as a cofactor.

It catalyses the reaction RNA(n) + a ribonucleoside 5'-triphosphate = RNA(n+1) + diphosphate. Its function is as follows. DNA-dependent RNA polymerase catalyzes the transcription of DNA into RNA using the four ribonucleoside triphosphates as substrates. The polypeptide is DNA-directed RNA polymerase subunit beta' (Neisseria meningitidis serogroup C / serotype 2a (strain ATCC 700532 / DSM 15464 / FAM18)).